The primary structure comprises 594 residues: Solute carrier family 13 member 1 (594 aa).

Helical transmembrane passes span phenylalanine 13–lysine 33, isoleucine 40–leucine 60, valine 77–threonine 97, valine 113–phenylalanine 133, and leucine 134–valine 154. An N-linked (GlcNAc...) asparagine glycan is attached at asparagine 174. Over residues threonine 192 to lysine 220 the composition is skewed to basic and acidic residues. Positions threonine 192 to alanine 226 are disordered. 8 consecutive transmembrane segments (helical) span residues leucine 239 to threonine 259, serine 283 to leucine 303, isoleucine 347 to phenylalanine 367, glycine 380 to alanine 400, leucine 461 to threonine 481, alanine 487 to isoleucine 507, proline 511 to alanine 531, and alanine 552 to isoleucine 572. N-linked (GlcNAc...) asparagine glycosylation is present at asparagine 590.

It belongs to the SLC13A/DASS transporter (TC 2.A.47) family. NADC subfamily. In terms of tissue distribution, highly expressed in kidney and ileum, detected at lower levels in duodenum/jejunum and colon, and at very low levels in cecum, testis, adrenal and adipose tissues. As to expression, expressed in the kidney.

Its subcellular location is the apical cell membrane. The enzyme catalyses sulfate(out) + 3 Na(+)(out) = sulfate(in) + 3 Na(+)(in). It carries out the reaction selenate(out) + 3 Na(+)(out) = selenate(in) + 3 Na(+)(in). The catalysed reaction is thiosulfate(out) + 3 Na(+)(out) = thiosulfate(in) + 3 Na(+)(in). Functionally, sodium:sulfate symporter that mediates sulfate reabsorption in the kidney and small intestine. Can also mediate the transport of selenate and thiosulfate. This Mus musculus (Mouse) protein is Solute carrier family 13 member 1 (Slc13a1).